Reading from the N-terminus, the 330-residue chain is Ribose-phosphate pyrophosphokinase (330 aa).

55 to 57 (DGE) lines the ATP pocket. Residues His-148 and Asp-187 each contribute to the Mg(2+) site. The active site involves Lys-211. Residues Arg-213, Asp-237, and 241–245 (DTGGT) each bind D-ribose 5-phosphate.

The protein belongs to the ribose-phosphate pyrophosphokinase family. Class I subfamily. In terms of assembly, homohexamer. Requires Mg(2+) as cofactor.

Its subcellular location is the cytoplasm. The enzyme catalyses D-ribose 5-phosphate + ATP = 5-phospho-alpha-D-ribose 1-diphosphate + AMP + H(+). Its pathway is metabolic intermediate biosynthesis; 5-phospho-alpha-D-ribose 1-diphosphate biosynthesis; 5-phospho-alpha-D-ribose 1-diphosphate from D-ribose 5-phosphate (route I): step 1/1. Functionally, involved in the biosynthesis of the central metabolite phospho-alpha-D-ribosyl-1-pyrophosphate (PRPP) via the transfer of pyrophosphoryl group from ATP to 1-hydroxyl of ribose-5-phosphate (Rib-5-P). In Nostoc sp. (strain PCC 7120 / SAG 25.82 / UTEX 2576), this protein is Ribose-phosphate pyrophosphokinase.